A 373-amino-acid polypeptide reads, in one-letter code: L-threonine 3-dehydrogenase, mitochondrial (373 aa).

NAD(+)-binding positions include 62 to 67 (GGLGQL), 88 to 90 (DIR), 106 to 107 (NI), Tyr195, Lys199, and Ile225. Catalysis depends on Tyr195, which acts as the Proton donor/acceptor.

It belongs to the NAD(P)-dependent epimerase/dehydratase family. As to quaternary structure, homodimer.

The protein resides in the mitochondrion. It carries out the reaction L-threonine + NAD(+) = (2S)-2-amino-3-oxobutanoate + NADH + H(+). It participates in amino-acid degradation; L-threonine degradation via oxydo-reductase pathway; glycine from L-threonine: step 1/2. Functionally, catalyzes the NAD(+)-dependent oxidation of L-threonine to 2-amino-3-ketobutyrate, mediating L-threonine catabolism. In Mus musculus (Mouse), this protein is L-threonine 3-dehydrogenase, mitochondrial.